The primary structure comprises 228 residues: Cytidylate kinase (228 aa).

Residue 12–20 (GPASAGKST) participates in ATP binding.

This sequence belongs to the cytidylate kinase family. Type 1 subfamily.

The protein resides in the cytoplasm. It catalyses the reaction CMP + ATP = CDP + ADP. The catalysed reaction is dCMP + ATP = dCDP + ADP. The sequence is that of Cytidylate kinase from Lactiplantibacillus plantarum (strain ATCC BAA-793 / NCIMB 8826 / WCFS1) (Lactobacillus plantarum).